The chain runs to 2193 residues: Protein sidekick-1 (2193 aa).

A compositionally biased stretch (low complexity) spans M1 to G23. Residues M1 to A56 are disordered. Ig-like C2-type domains follow at residues P86–Q168, G173–I259, P275–S363, P368–T458, and P462–T551. The cysteines at positions 108 and 151 are disulfide-linked. N-linked (GlcNAc...) asparagine glycosylation is found at N123, N253, and N283. 3 disulfide bridges follow: C297–C344, C390–C440, and C483–C535. N-linked (GlcNAc...) asparagine glycosylation is found at N532, N545, and N554. An Ig-like C2-type 6 domain is found at T556 to E645. Residues C577 and C629 are joined by a disulfide bond. Fibronectin type-III domains are found at residues P652–E748, P753–G849, P854–D952, A956–D1050, A1054–A1153, A1158–S1256, A1261–D1358, P1362–R1456, P1461–D1558, P1563–A1681, A1686–A1782, P1786–A1881, and S1884–A1982. N-linked (GlcNAc...) asparagine glycans are attached at residues N764, N803, N864, N997, and N1006. Residues N1264 and N1315 are each glycosylated (N-linked (GlcNAc...) asparagine). N1636, N1730, N1801, and N1875 each carry an N-linked (GlcNAc...) asparagine glycan. Residues F1992–V2012 form a helical membrane-spanning segment. Residues L2013–V2193 lie on the Cytoplasmic side of the membrane. Residues S2057 to D2080 form a disordered region. A PDZ-binding motif is present at residues T2187–V2193.

It belongs to the sidekick family. As to quaternary structure, homodimer; mediates homophilic interactions to promote cell adhesion. Interacts (via PDZ-binding motif) with MAGI1, MAGI2, DLG2, DLG3 and DLG4. Does not mediate homophilic interactions. In terms of tissue distribution, expressed by non-overlapping subsets of retinal neurons. Sdk1 and Sdk2 are expressed in non-overlapping subsets of interneurons and retinal ganglion cells (RGCs) that form synapses in distinct inner plexiform layer (IPL) sublaminae (at protein level).

Its subcellular location is the cell membrane. The protein localises to the synapse. In terms of biological role, adhesion molecule that promotes lamina-specific synaptic connections in the retina. Expressed in specific subsets of interneurons and retinal ganglion cells (RGCs) and promotes synaptic connectivity via homophilic interactions. This is Protein sidekick-1 from Mus musculus (Mouse).